Here is a 280-residue protein sequence, read N- to C-terminus: 2,3,4,5-tetrahydropyridine-2,6-dicarboxylate N-succinyltransferase (280 aa).

Belongs to the transferase hexapeptide repeat family.

It localises to the cytoplasm. The catalysed reaction is (S)-2,3,4,5-tetrahydrodipicolinate + succinyl-CoA + H2O = (S)-2-succinylamino-6-oxoheptanedioate + CoA. It functions in the pathway amino-acid biosynthesis; L-lysine biosynthesis via DAP pathway; LL-2,6-diaminopimelate from (S)-tetrahydrodipicolinate (succinylase route): step 1/3. This chain is 2,3,4,5-tetrahydropyridine-2,6-dicarboxylate N-succinyltransferase, found in Methylorubrum populi (strain ATCC BAA-705 / NCIMB 13946 / BJ001) (Methylobacterium populi).